The sequence spans 87 residues: Anaphase-promoting complex subunit 11 (87 aa).

The RING-type; atypical zinc finger occupies 35-77 (CVDCKIPGDDCPPVWGVCNHAFHMHCILKWLNANELQQCPMCR).

It belongs to the RING-box family. The APC/C is composed of at least 13 subunits that stay tightly associated throughout the cell cycle: anapc1, anapc2, anapc3, anapc4, anapc5, anapc6, anapc7, anapc8, anapc10, anapc11, cdc20, cdc26 and cdh1.

Its subcellular location is the nucleus. It functions in the pathway protein modification; protein ubiquitination. Its function is as follows. Component of the anaphase promoting complex/cyclosome (APC/C), a cell cycle-regulated E3 ubiquitin-protein ligase complex that controls progression through mitosis and the G1 phase of the cell cycle. The protein is Anaphase-promoting complex subunit 11 (anapc11) of Dictyostelium discoideum (Social amoeba).